The primary structure comprises 428 residues: Phosphomethylpyrimidine synthase 2 (428 aa).

Substrate-binding positions include Met-94, Tyr-123, His-162, 184–186 (SRG), 225–228 (NGMR), and Glu-264. Position 268 (His-268) interacts with Zn(2+). Tyr-291 is a substrate binding site. His-332 is a binding site for Zn(2+). Residues Cys-408, Cys-411, and Cys-415 each contribute to the [4Fe-4S] cluster site.

It belongs to the ThiC family. The cofactor is [4Fe-4S] cluster.

The enzyme catalyses 5-amino-1-(5-phospho-beta-D-ribosyl)imidazole + S-adenosyl-L-methionine = 4-amino-2-methyl-5-(phosphooxymethyl)pyrimidine + CO + 5'-deoxyadenosine + formate + L-methionine + 3 H(+). It participates in cofactor biosynthesis; thiamine diphosphate biosynthesis. Functionally, catalyzes the synthesis of the hydroxymethylpyrimidine phosphate (HMP-P) moiety of thiamine from aminoimidazole ribotide (AIR) in a radical S-adenosyl-L-methionine (SAM)-dependent reaction. The protein is Phosphomethylpyrimidine synthase 2 of Methanosarcina acetivorans (strain ATCC 35395 / DSM 2834 / JCM 12185 / C2A).